Reading from the N-terminus, the 140-residue chain is Large ribosomal subunit protein uL11 (140 aa).

It belongs to the universal ribosomal protein uL11 family. In terms of assembly, part of the ribosomal stalk of the 50S ribosomal subunit. Interacts with L10 and the large rRNA to form the base of the stalk. L10 forms an elongated spine to which L12 dimers bind in a sequential fashion forming a multimeric L10(L12)X complex. One or more lysine residues are methylated.

Its function is as follows. Forms part of the ribosomal stalk which helps the ribosome interact with GTP-bound translation factors. The protein is Large ribosomal subunit protein uL11 of Dehalococcoides mccartyi (strain ATCC BAA-2100 / JCM 16839 / KCTC 5957 / BAV1).